We begin with the raw amino-acid sequence, 468 residues long: Adenosylhomocysteinase (468 aa).

Substrate contacts are provided by threonine 57, aspartate 132, and glutamate 194. 195-197 (TTT) contributes to the NAD(+) binding site. 2 residues coordinate substrate: lysine 224 and aspartate 228. Residues asparagine 229, 258 to 263 (GFGDVG), glutamate 281, asparagine 316, 337 to 339 (IGH), and asparagine 382 each bind NAD(+).

It belongs to the adenosylhomocysteinase family. NAD(+) is required as a cofactor.

It is found in the cytoplasm. It carries out the reaction S-adenosyl-L-homocysteine + H2O = L-homocysteine + adenosine. The protein operates within amino-acid biosynthesis; L-homocysteine biosynthesis; L-homocysteine from S-adenosyl-L-homocysteine: step 1/1. Functionally, may play a key role in the regulation of the intracellular concentration of adenosylhomocysteine. The polypeptide is Adenosylhomocysteinase (Methylorubrum populi (strain ATCC BAA-705 / NCIMB 13946 / BJ001) (Methylobacterium populi)).